Reading from the N-terminus, the 452-residue chain is MASTTSIRQFSTSGSVKGLCAPGMGFSRMSSVRIGGACRAPSLLGGGSCSNMSVTSSRFSAGLGGSYGGGYTCSLGGGFGSSFGVSDALLGGSEKETMQNLNDRLATYLDRVRALEEANTDLEVKIREWYKKQGPGPARDYSPYFKTIEDLRNKILAATIDNASIVLQIDNARLAADDFRTKYETELNLRMSVEADINGLRRVLDELTLARADLEMQIETLKEELAYLKKNHEEEMNALRGQVGGDVNVEMDAAPGVDLSRILNEMRDQYEKMAEKNRKDAEEWFFTKTEELNREVATNTEALQSSRTEITELRRSVQNLEIELQSQLSMKASLENSLAETEARYGAQLAQLQGLISSMEQQLCELRCDMERQNHEYQVLLDVKTRLEQEIATYRRLLEGEDAHLATQYSSSLASQASREGTVTSRQVRTIVEEVQDGKVVSSREQVHRSTH.

The head stretch occupies residues 4-93 (TTSIRQFSTS…GVSDALLGGS (90 aa)). Coiled coils occupy residues 93 to 132 (SEKE…WYKK) and 188 to 407 (NLRM…HLAT). Residues 94-129 (EKETMQNLNDRLATYLDRVRALEEANTDLEVKIREW) are coil 1A. In terms of domain architecture, IF rod spans 94–405 (EKETMQNLND…RLLEGEDAHL (312 aa)). Residues 130-147 (YKKQGPGPARDYSPYFKT) form a linker 1 region. The segment at 148–239 (IEDLRNKILA…KNHEEEMNAL (92 aa)) is coil 1B. The segment at 240-262 (RGQVGGDVNVEMDAAPGVDLSRI) is linker 12. A coil 2 region spans residues 263-401 (LNEMRDQYEK…ATYRRLLEGE (139 aa)). The segment at 402 to 452 (DAHLATQYSSSLASQASREGTVTSRQVRTIVEEVQDGKVVSSREQVHRSTH) is tail.

Belongs to the intermediate filament family. In terms of assembly, heterodimer of a type I and a type II keratin. Colocalizes with KRT8/KRT18 filament network.

The protein localises to the cytoplasm. This chain is Keratin, type I cytoskeletal 42, found in Rattus norvegicus (Rat).